A 109-amino-acid polypeptide reads, in one-letter code: Putative glutaredoxin-C11 (109 aa).

Positions A2–W108 constitute a Glutaredoxin domain. An intrachain disulfide couples C22 to C25. The Responsive for interaction with TGA factors signature appears at A106–L109.

The protein belongs to the glutaredoxin family. CC-type subfamily.

It localises to the cytoplasm. The protein localises to the nucleus. Functionally, has a glutathione-disulfide oxidoreductase activity in the presence of NADPH and glutathione reductase. Reduces low molecular weight disulfides and proteins. The sequence is that of Putative glutaredoxin-C11 (GRXC11) from Oryza sativa subsp. japonica (Rice).